We begin with the raw amino-acid sequence, 220 residues long: FMN-dependent NADH:quinone oxidoreductase 1 (220 aa).

18-20 (SVS) contacts FMN.

Belongs to the azoreductase type 1 family. In terms of assembly, homodimer. FMN serves as cofactor.

It catalyses the reaction 2 a quinone + NADH + H(+) = 2 a 1,4-benzosemiquinone + NAD(+). It carries out the reaction N,N-dimethyl-1,4-phenylenediamine + anthranilate + 2 NAD(+) = 2-(4-dimethylaminophenyl)diazenylbenzoate + 2 NADH + 2 H(+). Quinone reductase that provides resistance to thiol-specific stress caused by electrophilic quinones. In terms of biological role, also exhibits azoreductase activity. Catalyzes the reductive cleavage of the azo bond in aromatic azo compounds to the corresponding amines. This Bacillus anthracis protein is FMN-dependent NADH:quinone oxidoreductase 1.